Reading from the N-terminus, the 122-residue chain is Large ribosomal subunit protein bL12 (122 aa).

The protein belongs to the bacterial ribosomal protein bL12 family. In terms of assembly, homodimer. Part of the ribosomal stalk of the 50S ribosomal subunit. Forms a multimeric L10(L12)X complex, where L10 forms an elongated spine to which 2 to 4 L12 dimers bind in a sequential fashion. Binds GTP-bound translation factors.

In terms of biological role, forms part of the ribosomal stalk which helps the ribosome interact with GTP-bound translation factors. Is thus essential for accurate translation. In Yersinia pseudotuberculosis serotype O:1b (strain IP 31758), this protein is Large ribosomal subunit protein bL12.